Reading from the N-terminus, the 213-residue chain is Kynurenine formamidase (213 aa).

Residue Trp-18 coordinates substrate. Residues His-48, His-52, and Asp-54 each contribute to the Zn(2+) site. The active-site Proton donor/acceptor is the His-58. Zn(2+)-binding residues include His-160 and Glu-172.

This sequence belongs to the Cyclase 1 superfamily. KynB family. As to quaternary structure, homodimer. It depends on Zn(2+) as a cofactor.

The enzyme catalyses N-formyl-L-kynurenine + H2O = L-kynurenine + formate + H(+). Its pathway is amino-acid degradation; L-tryptophan degradation via kynurenine pathway; L-kynurenine from L-tryptophan: step 2/2. Catalyzes the hydrolysis of N-formyl-L-kynurenine to L-kynurenine, the second step in the kynurenine pathway of tryptophan degradation. In Burkholderia pseudomallei (strain 668), this protein is Kynurenine formamidase.